The following is a 308-amino-acid chain: Tetraacyldisaccharide 4'-kinase (308 aa).

Residue 63-70 participates in ATP binding; it reads SFGGNGKT.

It belongs to the LpxK family.

The enzyme catalyses a lipid A disaccharide + ATP = a lipid IVA + ADP + H(+). Its pathway is glycolipid biosynthesis; lipid IV(A) biosynthesis; lipid IV(A) from (3R)-3-hydroxytetradecanoyl-[acyl-carrier-protein] and UDP-N-acetyl-alpha-D-glucosamine: step 6/6. Its function is as follows. Transfers the gamma-phosphate of ATP to the 4'-position of a tetraacyldisaccharide 1-phosphate intermediate (termed DS-1-P) to form tetraacyldisaccharide 1,4'-bis-phosphate (lipid IVA). The polypeptide is Tetraacyldisaccharide 4'-kinase (Campylobacter jejuni subsp. jejuni serotype O:2 (strain ATCC 700819 / NCTC 11168)).